We begin with the raw amino-acid sequence, 64 residues long: DNA gyrase inhibitor YacG (64 aa).

Residues Cys9, Cys12, Cys28, and Cys32 each coordinate Zn(2+). Residues 45 to 64 (KRIPSSGDLSESDDWSEEQK) form a disordered region. Residues 54–64 (SESDDWSEEQK) show a composition bias toward acidic residues.

It belongs to the DNA gyrase inhibitor YacG family. As to quaternary structure, interacts with GyrB. Requires Zn(2+) as cofactor.

Functionally, inhibits all the catalytic activities of DNA gyrase by preventing its interaction with DNA. Acts by binding directly to the C-terminal domain of GyrB, which probably disrupts DNA binding by the gyrase. The chain is DNA gyrase inhibitor YacG from Citrobacter koseri (strain ATCC BAA-895 / CDC 4225-83 / SGSC4696).